Here is a 394-residue protein sequence, read N- to C-terminus: L-lactate dehydrogenase (394 aa).

The region spanning 1–380 (MIISAASDYR…SRDSLVQNAE (380 aa)) is the FMN hydroxy acid dehydrogenase domain. Y24 contributes to the substrate binding site. The FMN site is built by S106 and Q127. A substrate-binding site is contributed by Y129. T155 lines the FMN pocket. R164 is a binding site for substrate. K251 provides a ligand contact to FMN. H275 serves as the catalytic Proton acceptor. R278 provides a ligand contact to substrate. 306–330 (DSGIRNGLDVVRMIALGADSVLLGR) serves as a coordination point for FMN.

Belongs to the FMN-dependent alpha-hydroxy acid dehydrogenase family. The cofactor is FMN.

It is found in the cell inner membrane. The catalysed reaction is (S)-lactate + A = pyruvate + AH2. Its function is as follows. Catalyzes the conversion of L-lactate to pyruvate. Is coupled to the respiratory chain. The polypeptide is L-lactate dehydrogenase (Klebsiella pneumoniae (strain 342)).